We begin with the raw amino-acid sequence, 88 residues long: Small ribosomal subunit protein uS15 (88 aa).

Belongs to the universal ribosomal protein uS15 family. In terms of assembly, part of the 30S ribosomal subunit. Forms a bridge to the 50S subunit in the 70S ribosome, contacting the 23S rRNA.

Functionally, one of the primary rRNA binding proteins, it binds directly to 16S rRNA where it helps nucleate assembly of the platform of the 30S subunit by binding and bridging several RNA helices of the 16S rRNA. Forms an intersubunit bridge (bridge B4) with the 23S rRNA of the 50S subunit in the ribosome. In Flavobacterium johnsoniae (strain ATCC 17061 / DSM 2064 / JCM 8514 / BCRC 14874 / CCUG 350202 / NBRC 14942 / NCIMB 11054 / UW101) (Cytophaga johnsonae), this protein is Small ribosomal subunit protein uS15.